The following is a 573-amino-acid chain: Patellin-1 (573 aa).

Disordered regions lie at residues 1–74 (MAQE…SVKE) and 111–202 (REFT…DGTK). Residue A2 is modified to N-acetylalanine. Basic and acidic residues predominate over residues 18 to 28 (VKEKPITDKEV). T29 carries the post-translational modification Phosphothreonine. Over residues 35-74 (AEKEEVAAPVSDEKAVPEKEVTPEKEAPAAEAEKSVSVKE) the composition is skewed to basic and acidic residues. A coiled-coil region spans residues 89-157 (AEEVQKKALE…TTEVKVEEEK (69 aa)). A Phosphothreonine modification is found at T118. 2 stretches are compositionally biased toward basic and acidic residues: residues 120 to 169 (VKEE…EKSS) and 176 to 190 (TKSE…EVTT). A Phosphoserine modification is found at S195. A Glycyl lysine isopeptide (Lys-Gly) (interchain with G-Cter in ubiquitin) cross-link involves residue K285. The CRAL-TRIO domain maps to 295–468 (SGEEVSEFEK…KYGGLSKDTP (174 aa)). The GOLD domain maps to 471 to 572 (EETITEAIVK…KKKVLYRFKT (102 aa)).

This sequence belongs to the patellin family. Interacts with the deubiquitinating enzyme AMSH3. As to expression, expressed ubiquitously with higher levels in expanding roots and leaves (at protein level).

It localises to the membrane. The protein resides in the cytoplasm. Its function is as follows. Carrier protein that may be involved in membrane-trafficking events associated with cell plate formation during cytokinesis. Binds to some hydrophobic molecules and promotes their transfer between the different cellular sites. Binds to phosphoinositides with a preference for PtdIns(5)P, PtdIns(4,5)P2 and PtdIns(3)P. This Arabidopsis thaliana (Mouse-ear cress) protein is Patellin-1 (PATL1).